The chain runs to 218 residues: Chromophore lyase CpcT/CpeT 1 (218 aa).

This sequence belongs to the CpcT/CpeT biliprotein lyase family.

Functionally, covalently attaches a chromophore to Cys residue(s) of phycobiliproteins. The protein is Chromophore lyase CpcT/CpeT 1 of Synechococcus sp. (strain JA-3-3Ab) (Cyanobacteria bacterium Yellowstone A-Prime).